A 149-amino-acid polypeptide reads, in one-letter code: Transcriptional regulator MraZ (149 aa).

SpoVT-AbrB domains lie at 6–52 and 81–124; these read RSHR…PLPD and AELM…DQGR.

Belongs to the MraZ family. In terms of assembly, forms oligomers.

It is found in the cytoplasm. It localises to the nucleoid. This is Transcriptional regulator MraZ from Nitratidesulfovibrio vulgaris (strain DSM 19637 / Miyazaki F) (Desulfovibrio vulgaris).